A 147-amino-acid polypeptide reads, in one-letter code: Hemoglobin subunit beta (147 aa).

At valine 2 the chain carries N-acetylvaline. Positions 3-147 constitute a Globin domain; sequence HLTGEEKSAV…VANALAHKYH (145 aa). Threonine 13 bears the Phosphothreonine mark. Serine 45 carries the phosphoserine modification. An N6-acetyllysine modification is found at lysine 60. Histidine 64 contributes to the heme b binding site. Position 83 is an N6-acetyllysine (lysine 83). Residue histidine 93 participates in heme b binding. S-nitrosocysteine is present on cysteine 94. Lysine 145 carries the post-translational modification N6-acetyllysine.

This sequence belongs to the globin family. As to quaternary structure, heterotetramer of two alpha chains and two beta chains. Red blood cells.

Functionally, involved in oxygen transport from the lung to the various peripheral tissues. The sequence is that of Hemoglobin subunit beta (HBB) from Callimico goeldii (Goeldi's marmoset).